The sequence spans 227 residues: Isoprenyl transferase (227 aa).

D13 is an active-site residue. Residue D13 coordinates Mg(2+). Substrate contacts are provided by residues 14–17 (GNGR), W18, R26, H30, and 58–60 (STE). N61 (proton acceptor) is an active-site residue. Residues W62, R64, R175, and 181-183 (RLS) contribute to the substrate site. E194 is a binding site for Mg(2+).

This sequence belongs to the UPP synthase family. In terms of assembly, homodimer. The cofactor is Mg(2+).

Its function is as follows. Catalyzes the condensation of isopentenyl diphosphate (IPP) with allylic pyrophosphates generating different type of terpenoids. The chain is Isoprenyl transferase from Treponema denticola (strain ATCC 35405 / DSM 14222 / CIP 103919 / JCM 8153 / KCTC 15104).